A 313-amino-acid polypeptide reads, in one-letter code: Methionyl-tRNA formyltransferase (313 aa).

Position 113 to 116 (113 to 116 (SLLP)) interacts with (6S)-5,6,7,8-tetrahydrofolate.

Belongs to the Fmt family.

The enzyme catalyses L-methionyl-tRNA(fMet) + (6R)-10-formyltetrahydrofolate = N-formyl-L-methionyl-tRNA(fMet) + (6S)-5,6,7,8-tetrahydrofolate + H(+). In terms of biological role, attaches a formyl group to the free amino group of methionyl-tRNA(fMet). The formyl group appears to play a dual role in the initiator identity of N-formylmethionyl-tRNA by promoting its recognition by IF2 and preventing the misappropriation of this tRNA by the elongation apparatus. In Acidithiobacillus ferrooxidans (strain ATCC 23270 / DSM 14882 / CIP 104768 / NCIMB 8455) (Ferrobacillus ferrooxidans (strain ATCC 23270)), this protein is Methionyl-tRNA formyltransferase.